The sequence spans 265 residues: Homeobox protein CDX-1 (265 aa).

The tract at residues 9–153 is disordered; that stretch reads KDSPVYPGPA…GGGGSGKTRT (145 aa). The span at 30 to 42 shows a compositional bias: pro residues; it reads YGPPAPPPAPPQY. The span at 73 to 92 shows a compositional bias: low complexity; it reads AAAYGPGPAAPAASPASLAF. The span at 93-108 shows a compositional bias: pro residues; sequence GPPPDFSPVPAPPGPG. A compositionally biased stretch (low complexity) spans 110–126; sequence GLLAQPLGGPGTPSSPG. Positions 154-213 form a DNA-binding region, homeobox; it reads KDKYRVVYTDHQRLELEKEFHYSRYITIRRKSELAANLGLTERQVKIWFQNRRAKERKVN. Residues 157–178 are interaction with DNA; the sequence is YRVVYTDHQRLELEKEFHYSRY. Positions 196–207 are interaction with 5-mCpG DNA; it reads RQVKIWFQNRRA. Residues 207–217 are compositionally biased toward basic residues; sequence AKERKVNKKKQ. The tract at residues 207-265 is disordered; sequence AKERKVNKKKQQQQQPPQPPMAHDITATPAGPSLGGLCPSNTSLLATSSPMPVKEEFLP. Over residues 245–256 the composition is skewed to polar residues; the sequence is PSNTSLLATSSP.

Belongs to the Caudal homeobox family. As to expression, intestinal epithelium.

It is found in the nucleus. Its function is as follows. Plays a role in transcriptional regulation. Involved in activated KRAS-mediated transcriptional activation of PRKD1 in colorectal cancer (CRC) cells. Binds to the PRKD1 promoter in colorectal cancer (CRC) cells. Could play a role in the terminal differentiation of the intestine. Binds preferentially to methylated DNA. The sequence is that of Homeobox protein CDX-1 (CDX1) from Homo sapiens (Human).